Reading from the N-terminus, the 148-residue chain is Large ribosomal subunit protein uL11 (148 aa).

Positions 89–108 (EKKKGSGAHKPGKEKVGQVT) are disordered.

This sequence belongs to the universal ribosomal protein uL11 family. Part of the ribosomal stalk of the 50S ribosomal subunit. Interacts with L10 and the large rRNA to form the base of the stalk. L10 forms an elongated spine to which L12 dimers bind in a sequential fashion forming a multimeric L10(L12)X complex. One or more lysine residues are methylated.

Its function is as follows. Forms part of the ribosomal stalk which helps the ribosome interact with GTP-bound translation factors. This chain is Large ribosomal subunit protein uL11, found in Anaeromyxobacter dehalogenans (strain 2CP-1 / ATCC BAA-258).